We begin with the raw amino-acid sequence, 230 residues long: Orotidine 5'-phosphate decarboxylase (230 aa).

Substrate-binding positions include Asp10, Lys31, 58–67 (DLKLHDIPNT), Thr117, Arg179, Gln188, Gly208, and Arg209. Lys60 (proton donor) is an active-site residue.

The protein belongs to the OMP decarboxylase family. Type 1 subfamily. Homodimer.

The catalysed reaction is orotidine 5'-phosphate + H(+) = UMP + CO2. The protein operates within pyrimidine metabolism; UMP biosynthesis via de novo pathway; UMP from orotate: step 2/2. Its function is as follows. Catalyzes the decarboxylation of orotidine 5'-monophosphate (OMP) to uridine 5'-monophosphate (UMP). In Staphylococcus epidermidis (strain ATCC 12228 / FDA PCI 1200), this protein is Orotidine 5'-phosphate decarboxylase.